Here is a 498-residue protein sequence, read N- to C-terminus: MAKTNSKNLLGQKIIKLLRNRDFVISVFVTLFLILLFRVISVIPLPGITISQNKNNLNNGVSDFFDLFNLLGGGGLSQLSLFAVGISPYISAQIIMQLLSTDLIPPLSKLAKSGELGRRRIELITRFVTLPFAVVQAFAIIALINNQRNGAIRFENGGILHQAFYIVTMTAGTYIGIFIGDIISKKGVGNGITLLILSGILARLPDGFIVMYRVLGGVIISTNPILTSAINFSLYFLAFLVLLLAISFVNSSTRRIPIQQTGEGMVLGNEKLPYLPIKLNAAGVIPVIFASSIMSIPITIAEFQPQSEARWFVEDYLSLRTPVGISLYVILIIIFTFFYSYIQINPEQLAENFNKSHKFIPGVRPGLDTEKHITKVLMRINFIGAPFLAIVAVIPYIISLVLNVPTTLSLGGTGIIIMVSASMELYRSLRSAATTTSYQRLRKDIANRIEAELSLNDYMNKPNLEHDQYGLLGQHKKVEPTQDKKKNPSDPLEVSQLW.

10 helical membrane-spanning segments follow: residues 23-43, 65-87, 124-144, 163-183, 191-211, 229-249, 281-301, 322-342, 382-402, and 406-426; these read FVIS…ISVI, FDLF…VGIS, ITRF…IALI, AFYI…GDII, GITL…FIVM, AINF…ISFV, AAGV…ITIA, PVGI…YSYI, FIGA…SLVL, and TTLS…MELY. Basic and acidic residues predominate over residues 478 to 488; that stretch reads VEPTQDKKKNP. Residues 478–498 are disordered; it reads VEPTQDKKKNPSDPLEVSQLW.

The protein belongs to the SecY/SEC61-alpha family. As to quaternary structure, component of the Sec protein translocase complex. Heterotrimer consisting of SecY, SecE and SecG subunits. The heterotrimers can form oligomers, although 1 heterotrimer is thought to be able to translocate proteins. Interacts with the ribosome. Interacts with SecDF, and other proteins may be involved. Interacts with SecA.

The protein resides in the cell membrane. Functionally, the central subunit of the protein translocation channel SecYEG. Consists of two halves formed by TMs 1-5 and 6-10. These two domains form a lateral gate at the front which open onto the bilayer between TMs 2 and 7, and are clamped together by SecE at the back. The channel is closed by both a pore ring composed of hydrophobic SecY resides and a short helix (helix 2A) on the extracellular side of the membrane which forms a plug. The plug probably moves laterally to allow the channel to open. The ring and the pore may move independently. This chain is Protein translocase subunit SecY, found in Mycoplasmoides gallisepticum (strain R(low / passage 15 / clone 2)) (Mycoplasma gallisepticum).